Here is a 499-residue protein sequence, read N- to C-terminus: Maturase K (499 aa).

The protein belongs to the intron maturase 2 family. MatK subfamily.

Its subcellular location is the plastid. It localises to the chloroplast. Usually encoded in the trnK tRNA gene intron. Probably assists in splicing its own and other chloroplast group II introns. This Batis maritima (Maritime saltwort) protein is Maturase K.